Here is a 639-residue protein sequence, read N- to C-terminus: 1-deoxy-D-xylulose-5-phosphate synthase (639 aa).

Thiamine diphosphate-binding positions include histidine 79 and 120–122 (GHS). Mg(2+) is bound at residue aspartate 151. Residues 152-153 (GG), asparagine 180, tyrosine 288, and glutamate 370 contribute to the thiamine diphosphate site. Asparagine 180 contributes to the Mg(2+) binding site.

The protein belongs to the transketolase family. DXPS subfamily. Homodimer. It depends on Mg(2+) as a cofactor. The cofactor is thiamine diphosphate.

The catalysed reaction is D-glyceraldehyde 3-phosphate + pyruvate + H(+) = 1-deoxy-D-xylulose 5-phosphate + CO2. Its pathway is metabolic intermediate biosynthesis; 1-deoxy-D-xylulose 5-phosphate biosynthesis; 1-deoxy-D-xylulose 5-phosphate from D-glyceraldehyde 3-phosphate and pyruvate: step 1/1. Functionally, catalyzes the acyloin condensation reaction between C atoms 2 and 3 of pyruvate and glyceraldehyde 3-phosphate to yield 1-deoxy-D-xylulose-5-phosphate (DXP). This Methylococcus capsulatus (strain ATCC 33009 / NCIMB 11132 / Bath) protein is 1-deoxy-D-xylulose-5-phosphate synthase.